We begin with the raw amino-acid sequence, 485 residues long: Glutamyl-tRNA(Gln) amidotransferase subunit A (485 aa).

Residues K79 and S154 each act as charge relay system in the active site. S178 (acyl-ester intermediate) is an active-site residue.

The protein belongs to the amidase family. GatA subfamily. In terms of assembly, heterotrimer of A, B and C subunits.

The enzyme catalyses L-glutamyl-tRNA(Gln) + L-glutamine + ATP + H2O = L-glutaminyl-tRNA(Gln) + L-glutamate + ADP + phosphate + H(+). In terms of biological role, allows the formation of correctly charged Gln-tRNA(Gln) through the transamidation of misacylated Glu-tRNA(Gln) in organisms which lack glutaminyl-tRNA synthetase. The reaction takes place in the presence of glutamine and ATP through an activated gamma-phospho-Glu-tRNA(Gln). The chain is Glutamyl-tRNA(Gln) amidotransferase subunit A from Clostridium botulinum (strain Loch Maree / Type A3).